Here is a 122-residue protein sequence, read N- to C-terminus: Conotoxin flf14c (122 aa).

The signal sequence occupies residues 1–22 (MGFRVLVLIVMVTTSALPFTFS). A propeptide spanning residues 23–96 (EESGRSPFRP…AESPVGQKRW (74 aa)) is cleaved from the precursor. The tract at residues 53 to 89 (RADGQTPDMHQPEMRRPEMRRPEVRRPEVRQPEFAES) is disordered. Residues 62-85 (HQPEMRRPEMRRPEVRRPEVRQPE) are compositionally biased toward basic and acidic residues. 2 cysteine pairs are disulfide-bonded: Cys101–Cys121 and Cys105–Cys117.

Expressed by the venom duct.

It is found in the secreted. This chain is Conotoxin flf14c, found in Conus anabathrum floridanus (Florida cone).